A 75-amino-acid polypeptide reads, in one-letter code: Small ribosomal subunit protein bS18 (75 aa).

It belongs to the bacterial ribosomal protein bS18 family. As to quaternary structure, part of the 30S ribosomal subunit. Forms a tight heterodimer with protein bS6.

In terms of biological role, binds as a heterodimer with protein bS6 to the central domain of the 16S rRNA, where it helps stabilize the platform of the 30S subunit. The sequence is that of Small ribosomal subunit protein bS18 from Vibrio atlanticus (strain LGP32) (Vibrio splendidus (strain Mel32)).